The sequence spans 253 residues: Probable transcriptional regulatory protein RC0681 (253 aa).

A disordered region spans residues 1–21; that stretch reads MAGHSKFKNIQHRKGAQDKKR.

Belongs to the TACO1 family.

Its subcellular location is the cytoplasm. This is Probable transcriptional regulatory protein RC0681 from Rickettsia conorii (strain ATCC VR-613 / Malish 7).